We begin with the raw amino-acid sequence, 154 residues long: Large ribosomal subunit protein uL13 (154 aa).

It belongs to the universal ribosomal protein uL13 family. In terms of assembly, part of the 50S ribosomal subunit.

This protein is one of the early assembly proteins of the 50S ribosomal subunit, although it is not seen to bind rRNA by itself. It is important during the early stages of 50S assembly. This Bartonella quintana (strain Toulouse) (Rochalimaea quintana) protein is Large ribosomal subunit protein uL13.